A 1179-amino-acid polypeptide reads, in one-letter code: RecBCD enzyme subunit RecB (1179 aa).

The DNA-binding and helicase activity, interacts with RecC stretch occupies residues 1-859; the sequence is MVYSDTKTSK…IIQNGKCMNY (859 aa). Residues 18-459 form the UvrD-like helicase ATP-binding domain; that stretch reads NIMKKKLNIF…YYLDTNWRSS (442 aa). 39-46 contributes to the ATP binding site; the sequence is ASAGTGKT. The UvrD-like helicase C-terminal domain maps to 485 to 755; sequence EPILSSSKNL…RIITIHKSKG (271 aa). The nuclease activity, interacts with RecD and RecA stretch occupies residues 910-1179; that stretch reads YSQITSFTKI…KLTKLILQKK (270 aa). 3 residues coordinate Mg(2+): His962, Asp1073, and Asp1086. The For nuclease activity role is filled by Asp1086.

Belongs to the helicase family. UvrD subfamily. In terms of assembly, heterotrimer of RecB, RecC and RecD. All subunits contribute to DNA-binding. Interacts with RecA. Mg(2+) serves as cofactor.

It carries out the reaction Exonucleolytic cleavage (in the presence of ATP) in either 5'- to 3'- or 3'- to 5'-direction to yield 5'-phosphooligonucleotides.. The catalysed reaction is Couples ATP hydrolysis with the unwinding of duplex DNA by translocating in the 3'-5' direction.. It catalyses the reaction ATP + H2O = ADP + phosphate + H(+). A helicase/nuclease that prepares dsDNA breaks (DSB) for recombinational DNA repair. Binds to DSBs and unwinds DNA via a highly rapid and processive ATP-dependent bidirectional helicase activity. Unwinds dsDNA until it encounters a Chi (crossover hotspot instigator) sequence from the 3' direction. Cuts ssDNA a few nucleotides 3' to the Chi site. The properties and activities of the enzyme are changed at Chi. The Chi-altered holoenzyme produces a long 3'-ssDNA overhang and facilitates RecA-binding to the ssDNA for homologous DNA recombination and repair. Holoenzyme degrades any linearized DNA that is unable to undergo homologous recombination. In the holoenzyme this subunit contributes ATPase, 3'-5' helicase, exonuclease activity and loads RecA onto ssDNA. The chain is RecBCD enzyme subunit RecB from Buchnera aphidicola subsp. Schizaphis graminum (strain Sg).